The primary structure comprises 1153 residues: Protein unc-13 homolog 4B (1153 aa).

The interval 54 to 84 (VLKSSLAPLEENGSGGEEDSDESPDGTLQLS) is disordered. Residues 162–288 (ATHEEIYEAA…MKEIAVTASS (127 aa)) enclose the C2 1 domain. The Ca(2+) site is built by aspartate 195, aspartate 201, aspartate 252, phenylalanine 253, and aspartate 254. The MHD1 domain occupies 637-755 (FEVYLILKRY…RCCIFYAQQM (119 aa)). The 107-residue stretch at 869-975 (SNSMDQLMMY…LETSDLIHQY (107 aa)) folds into the MHD2 domain. The C2 2 domain maps to 990-1114 (PYGQLTITAQ…EATPPGEQIM (125 aa)). Positions 1019, 1025, 1083, and 1085 each coordinate Ca(2+).

This sequence belongs to the unc-13 family. In terms of assembly, interacts with Cam. The cofactor is Ca(2+).

It is found in the cytoplasm. The protein resides in the cytoskeleton. Its subcellular location is the cell projection. It localises to the filopodium. The protein localises to the late endosome. It is found in the lysosome. In terms of biological role, essential for tracheal development in embryos. Functions with the GTPase Rab39 and downstream of dnd, to regulate lumen fusion between previously separate tracheal branches (anastomosis). Essential component of secretory lysosome-related organelles (SLs) that are present in the tracheal fusion tip cells (FCs). Mediates intracellular fusion of the extending tracheal stalk cell lumen in the FCs by recruiting the SNARE complex component Syx1A to the SLs, this may then enable the SLs to interact with complementary SNAREs (such as Syb) present in the apical membrane of the FC-FC interface and the membranes of the separate tracheal stalk cells. May also function in the maturation and exocytosis of the SLs. The chain is Protein unc-13 homolog 4B from Drosophila melanogaster (Fruit fly).